Here is a 388-residue protein sequence, read N- to C-terminus: Methylthioribose-1-phosphate isomerase (388 aa).

The active-site Proton donor is Asp-252.

The protein belongs to the eIF-2B alpha/beta/delta subunits family. MtnA subfamily.

The protein resides in the cytoplasm. It localises to the nucleus. The catalysed reaction is 5-(methylsulfanyl)-alpha-D-ribose 1-phosphate = 5-(methylsulfanyl)-D-ribulose 1-phosphate. The protein operates within amino-acid biosynthesis; L-methionine biosynthesis via salvage pathway; L-methionine from S-methyl-5-thio-alpha-D-ribose 1-phosphate: step 1/6. Its function is as follows. Catalyzes the interconversion of methylthioribose-1-phosphate (MTR-1-P) into methylthioribulose-1-phosphate (MTRu-1-P). This Verticillium alfalfae (strain VaMs.102 / ATCC MYA-4576 / FGSC 10136) (Verticillium wilt of alfalfa) protein is Methylthioribose-1-phosphate isomerase.